The sequence spans 188 residues: Photosystem I assembly protein Ycf4 (188 aa).

2 consecutive transmembrane segments (helical) span residues 22-42 (LGWA…GLSS) and 68-88 (LVMC…WCAI).

It belongs to the Ycf4 family.

Its subcellular location is the plastid. It localises to the chloroplast thylakoid membrane. Functionally, seems to be required for the assembly of the photosystem I complex. This chain is Photosystem I assembly protein Ycf4, found in Zygnema circumcarinatum (Green alga).